We begin with the raw amino-acid sequence, 1479 residues long: C-type mannose receptor 2 (1479 aa).

The first 30 residues, 1-30 (MGPGRPAPAPWPRHLLRCVLLLGCLHLGRP), serve as a signal peptide directing secretion. Over 31–1414 (GAPGDAALPE…PSALPENPAA (1384 aa)) the chain is Extracellular. Residues 41-167 (PNVFLIFSHG…WRIYGSEEDL (127 aa)) enclose the Ricin B-type lectin domain. A disulfide bond links cysteine 54 and cysteine 68. N-linked (GlcNAc...) (complex) asparagine glycosylation occurs at asparagine 69. A disulfide bond links cysteine 93 and cysteine 112. N-linked (GlcNAc...) asparagine glycosylation is present at asparagine 140. Residues 182–230 (SHGKPCTIPFKYDNQWFHGCTSTGREDGHLWCATTQDYGKDERWGFCPI) enclose the Fibronectin type-II domain. 4 disulfides stabilise this stretch: cysteine 187/cysteine 213, cysteine 201/cysteine 228, cysteine 266/cysteine 359, and cysteine 335/cysteine 351. A C-type lectin 1 domain is found at 244–360 (LTDSCYQFNF…CSIALPYVCK (117 aa)). An N-linked (GlcNAc...) asparagine glycan is attached at asparagine 364. 4 C-type lectin domains span residues 389 to 505 (FQGH…SICK), 528 to 644 (HSPS…RYIC), 678 to 809 (KLRY…WICK), and 832 to 951 (FQEA…YICK). Cystine bridges form between cysteine 410/cysteine 504 and cysteine 481/cysteine 496. A glycan (N-linked (GlcNAc...) asparagine) is linked at asparagine 588. Disulfide bonds link cysteine 618-cysteine 635, cysteine 704-cysteine 808, cysteine 785-cysteine 800, cysteine 853-cysteine 950, and cysteine 927-cysteine 942. N-linked (GlcNAc...) asparagine glycosylation is found at asparagine 954 and asparagine 1029. 3 C-type lectin domains span residues 979–1107 (FLNK…GFIC), 1132–1243 (YLNG…GAVC), and 1273–1393 (FREH…GVVC). Cysteines 1078 and 1098 form a disulfide. Residue lysine 1142 forms a Glycyl lysine isopeptide (Lys-Gly) (interchain with G-Cter in SUMO1) linkage. Cysteine 1220 and cysteine 1234 are disulfide-bonded. An N-linked (GlcNAc...) asparagine glycan is attached at asparagine 1350. A disulfide bond links cysteine 1369 and cysteine 1384. A helical membrane pass occupies residues 1415–1435 (LVVVLMAVLLLLALLTAALIL). At 1436-1479 (YRRRQSIERGAFEGARYSRSSSSPTEATEKNILVSDMEMNEQQE) the chain is on the cytoplasmic side. Residues 1450 to 1479 (ARYSRSSSSPTEATEKNILVSDMEMNEQQE) are disordered.

In terms of assembly, interacts with C-terminal region of type I collagen/COL1A1. Interacts directly with PLAUR/UPAR and PLAU/pro-UPA to form a tri-molecular complex. Interacts with collagen V. N-glycosylated. Ubiquitous with low expression in brain, placenta, lung, kidney, pancreas, spleen, thymus and colon. Expressed in endothelial cells, fibroblasts and macrophages. Highly expressed in fetal lung and kidney.

Its subcellular location is the membrane. Functionally, may play a role as endocytotic lectin receptor displaying calcium-dependent lectin activity. Internalizes glycosylated ligands from the extracellular space for release in an endosomal compartment via clathrin-mediated endocytosis. May be involved in plasminogen activation system controlling the extracellular level of PLAUR/PLAU, and thus may regulate protease activity at the cell surface. May contribute to cellular uptake, remodeling and degradation of extracellular collagen matrices. May play a role during cancer progression as well as in other chronic tissue destructive diseases acting on collagen turnover. May participate in remodeling of extracellular matrix cooperating with the matrix metalloproteinases (MMPs). This chain is C-type mannose receptor 2 (MRC2), found in Homo sapiens (Human).